The sequence spans 518 residues: Probable triacylglyceride transporter BCG_1471c (518 aa).

14 consecutive transmembrane segments (helical) span residues 7–27 (VAISAGSLAVLLGALDTYVVV), 46–66 (RITWIVTMYLLGYIAAMPLLG), 76–96 (LMLQVSLAGFIIGSVVTALAG), 110–130 (IQGVASGALLPITLALGADLW), 144–164 (AAQELGSVLGPLYGIFIVWLL), 170–190 (VFWINVPLTAIAMVMIHFSLP), 201–221 (VDLVGGLLLALALGLAVIGLY), 230–250 (VLPDYGAPLLVGALVAAVAFF), 270–290 (PFLSALGASVAAGAALMVTLV), 308–328 (AGMLLWFLIALPIGAVTGGWI), 337–357 (VAFAGLLIAAYGYWLISHWPV), 379–401 (LVVAGLGLGLVIGPLSSATLRVV), 408–428 (IASAAVVVARMTGMLIGVAAL), and 475–495 (IFTITAIVCVFGAVLGLLISG).

This sequence belongs to the major facilitator superfamily.

It is found in the cell inner membrane. Its activity is regulated as follows. Inhibited by CCCP and valinomycin. Functionally, in association with lipoprotein LprG probably transports triacylglycerides (TAG) across the inner cell membrane into the periplasm; TAG probably regulates lipid metabolism and growth regulation. Confers resistance to several drugs such as rifampicin, clofazimine and novobiocin; is also part of the oxidative stress response and is needed to maintain normal growth characteristics. Probably an efflux transporter, involved in maintaining correct cell wall permeability. Probably required with LprG for normal surface localization of lipoarabinomannan (LAM). Required for optimal growth on cholesterol. In Mycobacterium bovis (strain BCG / Pasteur 1173P2), this protein is Probable triacylglyceride transporter BCG_1471c.